Here is a 517-residue protein sequence, read N- to C-terminus: Cytochrome P450 1A1 (517 aa).

The segment at 34–45 (WQPRVPKGLKSP) is mitochondrial targeting signal. Ser-72 is a glycosylation site (O-linked (GlcNAc) serine). Phe-229 contributes to the substrate binding site. Cys-462 is a binding site for heme.

Belongs to the cytochrome P450 family. As to quaternary structure, interacts with cytosolic chaperones HSP70 and HSP90; this interaction is required for initial targeting to mitochondria. Interacts (via mitochondrial targeting signal) with TOMM40 (via N-terminus); this interaction is required for translocation across the mitochondrial outer membrane. It depends on heme as a cofactor.

The protein localises to the endoplasmic reticulum membrane. It localises to the mitochondrion inner membrane. It is found in the microsome membrane. The protein resides in the cytoplasm. The enzyme catalyses an organic molecule + reduced [NADPH--hemoprotein reductase] + O2 = an alcohol + oxidized [NADPH--hemoprotein reductase] + H2O + H(+). The catalysed reaction is estrone + reduced [NADPH--hemoprotein reductase] + O2 = 2-hydroxyestrone + oxidized [NADPH--hemoprotein reductase] + H2O + H(+). It catalyses the reaction estrone + reduced [NADPH--hemoprotein reductase] + O2 = 4-hydroxyestrone + oxidized [NADPH--hemoprotein reductase] + H2O + H(+). It carries out the reaction estrone + reduced [NADPH--hemoprotein reductase] + O2 = 6alpha-hydroxyestrone + oxidized [NADPH--hemoprotein reductase] + H2O + H(+). The enzyme catalyses estrone + reduced [NADPH--hemoprotein reductase] + O2 = 15alpha-hydroxyestrone + oxidized [NADPH--hemoprotein reductase] + H2O + H(+). The catalysed reaction is estrone + reduced [NADPH--hemoprotein reductase] + O2 = 16alpha-hydroxyestrone + oxidized [NADPH--hemoprotein reductase] + H2O + H(+). It catalyses the reaction 17beta-estradiol + reduced [NADPH--hemoprotein reductase] + O2 = 2-hydroxy-17beta-estradiol + oxidized [NADPH--hemoprotein reductase] + H2O + H(+). It carries out the reaction 17beta-estradiol + reduced [NADPH--hemoprotein reductase] + O2 = 4-hydroxy-17beta-estradiol + oxidized [NADPH--hemoprotein reductase] + H2O + H(+). The enzyme catalyses 17beta-estradiol + reduced [NADPH--hemoprotein reductase] + O2 = 6alpha-hydroxy-17beta-estradiol + oxidized [NADPH--hemoprotein reductase] + H2O + H(+). The catalysed reaction is 17beta-estradiol + reduced [NADPH--hemoprotein reductase] + O2 = 7alpha-hydroxy-17beta-estradiol + oxidized [NADPH--hemoprotein reductase] + H2O + H(+). It catalyses the reaction 17beta-estradiol + reduced [NADPH--hemoprotein reductase] + O2 = 15alpha-hydroxy-17beta-estradiol + oxidized [NADPH--hemoprotein reductase] + H2O + H(+). It carries out the reaction (5Z,8Z,11Z)-eicosatrienoate + reduced [NADPH--hemoprotein reductase] + O2 = 19-hydroxy-(5Z,8Z,11Z)-eicosatrienoate + oxidized [NADPH--hemoprotein reductase] + H2O + H(+). The enzyme catalyses (5Z,8Z,11Z,14Z)-eicosatetraenoate + reduced [NADPH--hemoprotein reductase] + O2 = 16-hydroxy-(5Z,8Z,11Z,14Z)-eicosatetraenoate + oxidized [NADPH--hemoprotein reductase] + H2O + H(+). The catalysed reaction is (5Z,8Z,11Z,14Z)-eicosatetraenoate + reduced [NADPH--hemoprotein reductase] + O2 = 17-hydroxy-(5Z,8Z,11Z,14Z)-eicosatetraenoate + oxidized [NADPH--hemoprotein reductase] + H2O + H(+). It catalyses the reaction (5Z,8Z,11Z,14Z)-eicosatetraenoate + reduced [NADPH--hemoprotein reductase] + O2 = 18-hydroxy-(5Z,8Z,11Z,14Z)-eicosatetraenoate + oxidized [NADPH--hemoprotein reductase] + H2O + H(+). It carries out the reaction (5Z,8Z,11Z,14Z)-eicosatetraenoate + reduced [NADPH--hemoprotein reductase] + O2 = 19-hydroxy-(5Z,8Z,11Z,14Z)-eicosatetraenoate + oxidized [NADPH--hemoprotein reductase] + H2O + H(+). The enzyme catalyses (5Z,8Z,11Z,14Z,17Z)-eicosapentaenoate + reduced [NADPH--hemoprotein reductase] + O2 = 19-hydroxy-(5Z,8Z,11Z,14Z,17Z)-eicosapentaenoate + oxidized [NADPH--hemoprotein reductase] + H2O + H(+). The catalysed reaction is (5Z,8Z,11Z,14Z)-eicosatetraenoate + reduced [NADPH--hemoprotein reductase] + O2 = (8R,9S)-epoxy-(5Z,11Z,14Z)-eicosatrienoate + oxidized [NADPH--hemoprotein reductase] + H2O + H(+). It catalyses the reaction (5Z,8Z,11Z,14Z)-eicosatetraenoate + reduced [NADPH--hemoprotein reductase] + O2 = (11R,12S)-epoxy-(5Z,8Z,14Z)-eicosatrienoate + oxidized [NADPH--hemoprotein reductase] + H2O + H(+). It carries out the reaction (5Z,8Z,11Z,14Z)-eicosatetraenoate + reduced [NADPH--hemoprotein reductase] + O2 = (14S,15R)-epoxy-(5Z,8Z,11Z)-eicosatrienoate + oxidized [NADPH--hemoprotein reductase] + H2O + H(+). The enzyme catalyses (5Z,8Z,11Z,14Z)-eicosatetraenoate + reduced [NADPH--hemoprotein reductase] + O2 = (14R,15S)-epoxy-(5Z,8Z,11Z)-eicosatrienoate + oxidized [NADPH--hemoprotein reductase] + H2O + H(+). The catalysed reaction is (5Z,8Z,11Z,14Z,17Z)-eicosapentaenoate + reduced [NADPH--hemoprotein reductase] + O2 = (17R,18S)-epoxy-(5Z,8Z,11Z,14Z)-eicosatetraenoate + oxidized [NADPH--hemoprotein reductase] + H2O + H(+). It catalyses the reaction (4Z,7Z,10Z,13Z,16Z,19Z)-docosahexaenoate + reduced [NADPH--hemoprotein reductase] + O2 = (19S,20R)-epoxy-(4Z,7Z,10Z,13Z,16Z)-docosapentaenoate + oxidized [NADPH--hemoprotein reductase] + H2O + H(+). It carries out the reaction (4Z,7Z,10Z,13Z,16Z,19Z)-docosahexaenoate + reduced [NADPH--hemoprotein reductase] + O2 = (19R,20S)-epoxy-(4Z,7Z,10Z,13Z,16Z)-docosapentaenoate + oxidized [NADPH--hemoprotein reductase] + H2O + H(+). The enzyme catalyses all-trans-retinol + reduced [NADPH--hemoprotein reductase] + O2 = all-trans-retinal + oxidized [NADPH--hemoprotein reductase] + 2 H2O + H(+). The catalysed reaction is all-trans-retinal + reduced [NADPH--hemoprotein reductase] + O2 = all-trans-retinoate + oxidized [NADPH--hemoprotein reductase] + H2O + 2 H(+). It catalyses the reaction (13S)-hydroperoxy-(9Z,11E)-octadecadienoate = 13-oxo-(9Z,11E)-octadecadienoate + H2O. It carries out the reaction (12S)-hydroperoxy-(5Z,8Z,10E,14Z)-eicosatetraenoate = 12-oxo-(5Z,8Z,10E,14Z)-eicosatetraenoate + H2O. The enzyme catalyses (15S)-hydroperoxy-(5Z,8Z,11Z,13E)-eicosatetraenoate = 15-oxo-(5Z,8Z,11Z,13E)-eicosatetraenoate + H2O. The catalysed reaction is (5S)-hydroperoxy-(6E,8Z,11Z,14Z)-eicosatetraenoate = 5-oxo-(6E,8Z,11Z,14Z)-eicosatetraenoate + H2O. It participates in steroid hormone biosynthesis. It functions in the pathway lipid metabolism; fatty acid metabolism. The protein operates within cofactor metabolism; retinol metabolism. Functionally, a cytochrome P450 monooxygenase involved in the metabolism of various endogenous substrates, including fatty acids, steroid hormones and vitamins. Mechanistically, uses molecular oxygen inserting one oxygen atom into a substrate, and reducing the second into a water molecule, with two electrons provided by NADPH via cytochrome P450 reductase (CPR; NADPH-ferrihemoprotein reductase). Catalyzes the hydroxylation of carbon-hydrogen bonds. Exhibits high catalytic activity for the formation of hydroxyestrogens from estrone (E1) and 17beta-estradiol (E2), namely 2-hydroxy E1 and E2, as well as D-ring hydroxylated E1 and E2 at the C15alpha and C16alpha positions. Displays different regioselectivities for polyunsaturated fatty acids (PUFA) hydroxylation. Catalyzes the epoxidation of double bonds of certain PUFA. Converts arachidonic acid toward epoxyeicosatrienoic acid (EET) regioisomers, 8,9-, 11,12-, and 14,15-EET, that function as lipid mediators in the vascular system. Displays an absolute stereoselectivity in the epoxidation of eicosapentaenoic acid (EPA) producing the 17(R),18(S) enantiomer. May play an important role in all-trans retinoic acid biosynthesis in extrahepatic tissues. Catalyzes two successive oxidative transformation of all-trans retinol to all-trans retinal and then to the active form all-trans retinoic acid. May also participate in eicosanoids metabolism by converting hydroperoxide species into oxo metabolites (lipoxygenase-like reaction, NADPH-independent). The chain is Cytochrome P450 1A1 (CYP1A1) from Felis catus (Cat).